An 87-amino-acid polypeptide reads, in one-letter code: DNA-directed RNA polymerase subunit omega (87 aa).

It belongs to the RNA polymerase subunit omega family. As to quaternary structure, the RNAP catalytic core consists of 2 alpha, 1 beta, 1 beta' and 1 omega subunit. When a sigma factor is associated with the core the holoenzyme is formed, which can initiate transcription.

The catalysed reaction is RNA(n) + a ribonucleoside 5'-triphosphate = RNA(n+1) + diphosphate. Promotes RNA polymerase assembly. Latches the N- and C-terminal regions of the beta' subunit thereby facilitating its interaction with the beta and alpha subunits. This chain is DNA-directed RNA polymerase subunit omega, found in Acidothermus cellulolyticus (strain ATCC 43068 / DSM 8971 / 11B).